We begin with the raw amino-acid sequence, 130 residues long: Small ribosomal subunit protein uS9 (130 aa).

Belongs to the universal ribosomal protein uS9 family.

The protein is Small ribosomal subunit protein uS9 of Janthinobacterium sp. (strain Marseille) (Minibacterium massiliensis).